Consider the following 569-residue polypeptide: Sulfite reductase [NADPH] hemoprotein beta-component (569 aa).

[4Fe-4S] cluster contacts are provided by Cys-433, Cys-439, Cys-478, and Cys-482. Residue Cys-482 coordinates siroheme.

It belongs to the nitrite and sulfite reductase 4Fe-4S domain family. In terms of assembly, alpha(8)-beta(8). The alpha component is a flavoprotein, the beta component is a hemoprotein. Requires siroheme as cofactor. [4Fe-4S] cluster serves as cofactor.

It catalyses the reaction hydrogen sulfide + 3 NADP(+) + 3 H2O = sulfite + 3 NADPH + 4 H(+). Its pathway is sulfur metabolism; hydrogen sulfide biosynthesis; hydrogen sulfide from sulfite (NADPH route): step 1/1. Component of the sulfite reductase complex that catalyzes the 6-electron reduction of sulfite to sulfide. This is one of several activities required for the biosynthesis of L-cysteine from sulfate. The chain is Sulfite reductase [NADPH] hemoprotein beta-component from Shewanella sediminis (strain HAW-EB3).